The following is a 289-amino-acid chain: Cell division protein ZipA (289 aa).

Position 1 (M1) is a topological domain, periplasmic. Residues 2-22 form a helical membrane-spanning segment; the sequence is DIGLREWLIVIGLIVIAGILF. Residues 23–289 lie on the Cytoplasmic side of the membrane; the sequence is DGWRRMRGGK…HERRSLMQKR (267 aa). Positions 65-141 are disordered; the sequence is HREPSFDEQD…KEREKAPAVA (77 aa). The span at 81 to 99 shows a compositional bias: basic and acidic residues; the sequence is RETKERKGGKRQEEPRQGD. Residues 100-114 are compositionally biased toward acidic residues; the sequence is LDLDEGLALEADPSD.

The protein belongs to the ZipA family. In terms of assembly, interacts with FtsZ via their C-terminal domains.

The protein resides in the cell inner membrane. Its function is as follows. Essential cell division protein that stabilizes the FtsZ protofilaments by cross-linking them and that serves as a cytoplasmic membrane anchor for the Z ring. Also required for the recruitment to the septal ring of downstream cell division proteins. The sequence is that of Cell division protein ZipA from Pseudomonas aeruginosa (strain UCBPP-PA14).